We begin with the raw amino-acid sequence, 183 residues long: Inner membrane-spanning protein YciB (183 aa).

5 consecutive transmembrane segments (helical) span residues 19–39 (LYGVQQAAITLVIATVIQLIV), 53–73 (IMGIFVVFFGILTAYFNDLNF), 76–96 (WKVTIINGLFAAVLLVSQFVF), 121–141 (LGWAGFFIICMLLNIVISYYF), and 151–171 (TFGFTGLSLIAAIATGVYLYP).

Belongs to the YciB family.

Its subcellular location is the cell inner membrane. Its function is as follows. Plays a role in cell envelope biogenesis, maintenance of cell envelope integrity and membrane homeostasis. The sequence is that of Inner membrane-spanning protein YciB from Actinobacillus pleuropneumoniae serotype 7 (strain AP76).